An 86-amino-acid polypeptide reads, in one-letter code: Cyclin-dependent kinase inhibitor 6 (86 aa).

The span at 1 to 15 (MAAAAATVTAVQPAA) shows a compositional bias: low complexity. Positions 1-23 (MAAAAATVTAVQPAASSCGKRDG) are disordered.

It belongs to the CDI family. ICK/KRP subfamily.

The sequence is that of Cyclin-dependent kinase inhibitor 6 (KRP6) from Oryza sativa subsp. japonica (Rice).